Consider the following 360-residue polypeptide: Chorismate synthase (360 aa).

Arginine 48 and arginine 54 together coordinate NADP(+). FMN contacts are provided by residues 125-127, 246-247, glycine 286, 301-305, and arginine 327; these read RSS, NA, and KPTSS.

Belongs to the chorismate synthase family. As to quaternary structure, homotetramer. It depends on FMNH2 as a cofactor.

It catalyses the reaction 5-O-(1-carboxyvinyl)-3-phosphoshikimate = chorismate + phosphate. The protein operates within metabolic intermediate biosynthesis; chorismate biosynthesis; chorismate from D-erythrose 4-phosphate and phosphoenolpyruvate: step 7/7. Functionally, catalyzes the anti-1,4-elimination of the C-3 phosphate and the C-6 proR hydrogen from 5-enolpyruvylshikimate-3-phosphate (EPSP) to yield chorismate, which is the branch point compound that serves as the starting substrate for the three terminal pathways of aromatic amino acid biosynthesis. This reaction introduces a second double bond into the aromatic ring system. This chain is Chorismate synthase, found in Actinobacillus succinogenes (strain ATCC 55618 / DSM 22257 / CCUG 43843 / 130Z).